A 281-amino-acid polypeptide reads, in one-letter code: sn-glycerol-3-phosphate transport system permease protein UgpE (281 aa).

Helical transmembrane passes span 14–34, 85–105, 113–133, 142–162, 201–221, and 247–267; these read IMLI…FVAA, FAIT…IVYF, FFWL…FPTI, LDSY…TFLF, AALF…PILI, and WNQV…VVLL. The ABC transmembrane type-1 domain maps to 77–268; sequence LLNSFVMAFA…IPPVVVVLLM (192 aa).

This sequence belongs to the binding-protein-dependent transport system permease family. UgpAE subfamily. In terms of assembly, the complex is composed of two ATP-binding proteins (UgpC), two transmembrane proteins (UgpA and UgpE) and a solute-binding protein (UgpB).

It is found in the cell inner membrane. Part of the ABC transporter complex UgpBAEC involved in sn-glycerol-3-phosphate (G3P) import. Probably responsible for the translocation of the substrate across the membrane. The polypeptide is sn-glycerol-3-phosphate transport system permease protein UgpE (ugpE) (Yersinia pestis bv. Antiqua (strain Antiqua)).